The following is a 258-amino-acid chain: Trypsin eta (258 aa).

Positions 1–22 are cleaved as a signal peptide; the sequence is MNKVILRILALLFLLGIGAVSA. Positions 23 to 27 are cleaved as a propeptide — activation peptide; that stretch reads QPDGR. One can recognise a Peptidase S1 domain in the interval 28–258; it reads IVGGADTTNY…YFKDWIASRV (231 aa). An intrachain disulfide couples cysteine 59 to cysteine 75. Catalysis depends on charge relay system residues histidine 74 and aspartate 120. 2 disulfides stabilise this stretch: cysteine 185-cysteine 200 and cysteine 211-cysteine 235. Catalysis depends on serine 215, which acts as the Charge relay system.

It belongs to the peptidase S1 family.

The protein localises to the secreted. It localises to the extracellular space. The catalysed reaction is Preferential cleavage: Arg-|-Xaa, Lys-|-Xaa.. The polypeptide is Trypsin eta (etaTry) (Drosophila erecta (Fruit fly)).